Here is a 135-residue protein sequence, read N- to C-terminus: C-type natriuretic peptide (135 aa).

The signal sequence occupies residues 1 to 25 (MSGHTSFYCGLLLLLLIQVQARPRA). Residues 26 to 113 (DDSLQVLSRL…PLRFKGRSKK (88 aa)) constitute a propeptide that is removed on maturation. A disordered region spans residues 46–67 (EELNNEAQEISPAASLPDLNTD). Cysteine 119 and cysteine 135 form a disulfide bridge.

The protein belongs to the natriuretic peptide family.

It is found in the secreted. In terms of biological role, hormone which may be vasoactive and natriuretic. Has a cGMP-stimulating activity. The protein is C-type natriuretic peptide of Squalus acanthias (Spiny dogfish).